The chain runs to 174 residues: UBX domain-containing protein 5 (174 aa).

Residues 8-58 adopt a coiled-coil conformation; sequence QKEKFAEDRALLSQQNKEYAESLAKDIAKKEEKDKIRFEAEQKELRKKTIQ. The UBX domain maps to 74–120; the sequence is RLLVRYPNGSRLILSFSPSQPMTSLFDAIILNPACPDYFSVRSVYPR.

As to quaternary structure, forms a complex composed of deubiquitinating enzyme atx-3, adapter ubxn-5 and cdc-48.1. Interacts with atx-3 (via C-terminus). Interacts with cdc-48.1 (via N-terminus) and cdc-48.2. In terms of tissue distribution, specifically expressed in the germline.

Functionally, probably acts as an adapter for ATPase cdc-48.1 and/or cdc-48.2, conferring substrate specificity. Unlike other UBX domain-containing protein does not bind 'Lys-48'-polyubiquitinated chain. The chain is UBX domain-containing protein 5 from Caenorhabditis elegans.